A 334-amino-acid polypeptide reads, in one-letter code: Cytoskeleton protein RodZ (334 aa).

The Cytoplasmic portion of the chain corresponds to 1–111; sequence MNTEATHDQN…LGKRRKKRDG (111 aa). The HTH cro/C1-type domain occupies 19 to 71; that stretch reads LRNAREQLGLSQQAVAERLCLKVSTVRDIEEDKAPSDLASTFLRGYIRSYARL. Positions 30–49 form a DNA-binding region, H-T-H motif; sequence QQAVAERLCLKVSTVRDIEE. Residues 112–132 traverse the membrane as a helical; Signal-anchor for type II membrane protein segment; sequence WLMSFTWLVLFVVVGLTGAWW. Over 133-334 the chain is Periplasmic; it reads WQNHKAQQEE…TLNAEPTPAQ (202 aa). A disordered region spans residues 155–241; that stretch reads NADKDSGQSV…PSALPTSQAG (87 aa). Composition is skewed to low complexity over residues 170 to 211 and 219 to 241; these read AATS…TVVA and TAATSAAPAATETPSALPTSQAG.

It belongs to the RodZ family.

The protein resides in the cell inner membrane. Functionally, cytoskeletal protein that is involved in cell-shape control through regulation of the length of the long axis. This Salmonella agona (strain SL483) protein is Cytoskeleton protein RodZ.